Consider the following 383-residue polypeptide: UDP-N-acetylglucosamine--N-acetylmuramyl-(pentapeptide) pyrophosphoryl-undecaprenol N-acetylglucosamine transferase (383 aa).

UDP-N-acetyl-alpha-D-glucosamine contacts are provided by residues 10 to 12 (TGG), Asn-124, Arg-165, Ser-190, Ile-245, and Gln-290. The disordered stretch occupies residues 364–383 (PFGQAREPGQKPARPPDLAS).

The protein belongs to the glycosyltransferase 28 family. MurG subfamily.

Its subcellular location is the cell inner membrane. The catalysed reaction is di-trans,octa-cis-undecaprenyl diphospho-N-acetyl-alpha-D-muramoyl-L-alanyl-D-glutamyl-meso-2,6-diaminopimeloyl-D-alanyl-D-alanine + UDP-N-acetyl-alpha-D-glucosamine = di-trans,octa-cis-undecaprenyl diphospho-[N-acetyl-alpha-D-glucosaminyl-(1-&gt;4)]-N-acetyl-alpha-D-muramoyl-L-alanyl-D-glutamyl-meso-2,6-diaminopimeloyl-D-alanyl-D-alanine + UDP + H(+). The protein operates within cell wall biogenesis; peptidoglycan biosynthesis. Cell wall formation. Catalyzes the transfer of a GlcNAc subunit on undecaprenyl-pyrophosphoryl-MurNAc-pentapeptide (lipid intermediate I) to form undecaprenyl-pyrophosphoryl-MurNAc-(pentapeptide)GlcNAc (lipid intermediate II). This chain is UDP-N-acetylglucosamine--N-acetylmuramyl-(pentapeptide) pyrophosphoryl-undecaprenol N-acetylglucosamine transferase, found in Anaeromyxobacter dehalogenans (strain 2CP-C).